The following is a 469-amino-acid chain: Uronate isomerase (469 aa).

The protein belongs to the metallo-dependent hydrolases superfamily. Uronate isomerase family.

It carries out the reaction D-glucuronate = D-fructuronate. The catalysed reaction is aldehydo-D-galacturonate = keto-D-tagaturonate. The protein operates within carbohydrate metabolism; pentose and glucuronate interconversion. The polypeptide is Uronate isomerase (Edwardsiella ictaluri (strain 93-146)).